Reading from the N-terminus, the 241-residue chain is Uracil-DNA glycosylase (241 aa).

The Proton acceptor role is filled by Asp68.

It belongs to the uracil-DNA glycosylase (UDG) superfamily. UNG family.

The protein localises to the cytoplasm. The enzyme catalyses Hydrolyzes single-stranded DNA or mismatched double-stranded DNA and polynucleotides, releasing free uracil.. In terms of biological role, excises uracil residues from the DNA which can arise as a result of misincorporation of dUMP residues by DNA polymerase or due to deamination of cytosine. The polypeptide is Uracil-DNA glycosylase (Rhizobium meliloti (strain 1021) (Ensifer meliloti)).